Reading from the N-terminus, the 422-residue chain is UDP-N-acetyl-D-glucosamine 6-dehydrogenase (422 aa).

V14, D32, R37, T83, and T118 together coordinate NAD(+). The Nucleophile role is filled by C258. R329 contacts NAD(+).

Belongs to the UDP-glucose/GDP-mannose dehydrogenase family.

The catalysed reaction is UDP-N-acetyl-alpha-D-glucosamine + 2 NAD(+) + H2O = UDP-2-acetamido-2-deoxy-alpha-D-glucuronate + 2 NADH + 3 H(+). The protein operates within bacterial outer membrane biogenesis; LPS O-antigen biosynthesis. With respect to regulation, requires either potassium or ammonium-containing salts for activity. Dehydrogenase required for the biosynthesis of the B-band O antigen of serotype O6 lipopolysaccharide. Is also required for flagellin glycosylation. Catalyzes the conversion of UDP-N-acetylglucosamine (UDP-GlcNAc) to UDP-N-acetylglucosaminuronic acid (UDP-GlcNAcA). Can also catalyze the conversion of UDP-N-acetyl-galactosamine (UDP-GalNAc) to UDP-N-acetylgalactosaminuronic acid (UDP-GalNAcA), with low efficiency. Can use NAD(+) or NADP(+), with a preference for NAD(+). This chain is UDP-N-acetyl-D-glucosamine 6-dehydrogenase, found in Pseudomonas aeruginosa.